The chain runs to 148 residues: Deoxyuridine 5'-triphosphate nucleotidohydrolase (148 aa).

Residues 67-69 (RSG), Asn-80, 84-86 (TID), and Lys-94 each bind substrate.

This sequence belongs to the dUTPase family. It depends on Mg(2+) as a cofactor.

The enzyme catalyses dUTP + H2O = dUMP + diphosphate + H(+). Its pathway is pyrimidine metabolism; dUMP biosynthesis; dUMP from dCTP (dUTP route): step 2/2. Functionally, this enzyme is involved in nucleotide metabolism: it produces dUMP, the immediate precursor of thymidine nucleotides and it decreases the intracellular concentration of dUTP so that uracil cannot be incorporated into DNA. This is Deoxyuridine 5'-triphosphate nucleotidohydrolase from Orientia tsutsugamushi (strain Boryong) (Rickettsia tsutsugamushi).